A 393-amino-acid polypeptide reads, in one-letter code: NAD(P)H-quinone oxidoreductase subunit H, chloroplastic (393 aa).

Belongs to the complex I 49 kDa subunit family. In terms of assembly, NDH is composed of at least 16 different subunits, 5 of which are encoded in the nucleus.

The protein resides in the plastid. Its subcellular location is the chloroplast thylakoid membrane. It catalyses the reaction a plastoquinone + NADH + (n+1) H(+)(in) = a plastoquinol + NAD(+) + n H(+)(out). The catalysed reaction is a plastoquinone + NADPH + (n+1) H(+)(in) = a plastoquinol + NADP(+) + n H(+)(out). In terms of biological role, NDH shuttles electrons from NAD(P)H:plastoquinone, via FMN and iron-sulfur (Fe-S) centers, to quinones in the photosynthetic chain and possibly in a chloroplast respiratory chain. The immediate electron acceptor for the enzyme in this species is believed to be plastoquinone. Couples the redox reaction to proton translocation, and thus conserves the redox energy in a proton gradient. This is NAD(P)H-quinone oxidoreductase subunit H, chloroplastic from Helianthus annuus (Common sunflower).